A 124-amino-acid polypeptide reads, in one-letter code: Orexigenic neuropeptide QRFP (124 aa).

Residues 1–17 form the signal peptide; it reads MRGFRPLLSLLLPLSAC. Positions 18-79 are excised as a propeptide; that stretch reads FPLLDRRGPT…REHTGFRLGR (62 aa). A disordered region spans residues 63 to 101; sequence REQQASHREHTGFRLGRQDGSSEAAGFLPADSEKASGPL. At F122 the chain carries Phenylalanine amide.

The protein belongs to the RFamide neuropeptide family. As to quaternary structure, ligand for the G-protein coupled receptor QRFPR/GPR103. Expressed in the brain with highest levels in the periventricular hypothalamic nucleus and lateral hypothalamic areas. Expressed at moderate levels in the adrenal gland, eye, heart, intestine, liver, lung, kidney, mesenteric lymph node, ovary, placenta, Peyer patches, skin, spleen, stomach, testis, thymus and uterus.

The protein resides in the secreted. In terms of biological role, stimulates feeding and grooming behavior, metabolic rate and locomotor activity and increases blood pressure. May have orexigenic activity. May promote aldosterone secretion by the adrenal gland. The polypeptide is Orexigenic neuropeptide QRFP (Mus musculus (Mouse)).